A 103-amino-acid polypeptide reads, in one-letter code: Integration host factor subunit beta (103 aa).

Positions 62 to 81 (RNPKTGESVALPGKHVPHFK) are disordered.

It belongs to the bacterial histone-like protein family. Heterodimer of an alpha and a beta chain.

Functionally, this protein is one of the two subunits of integration host factor, a specific DNA-binding protein that functions in genetic recombination as well as in transcriptional and translational control. The sequence is that of Integration host factor subunit beta from Xanthomonas campestris pv. campestris (strain B100).